Reading from the N-terminus, the 53-residue chain is Cytochrome c oxidase subunit 7e (53 aa).

In terms of assembly, slime mold cytochrome c oxidase consists of at least seven different polypeptides species, subunits I, II, III, IV, V, VI, and VIIe/s in order of MW.

The protein localises to the mitochondrion inner membrane. It carries out the reaction 4 Fe(II)-[cytochrome c] + O2 + 8 H(+)(in) = 4 Fe(III)-[cytochrome c] + 2 H2O + 4 H(+)(out). Functionally, this protein is one of the nuclear-coded polypeptide chains of cytochrome c oxidase, the terminal oxidase in mitochondrial electron transport. This is Cytochrome c oxidase subunit 7e (cxgE) from Dictyostelium discoideum (Social amoeba).